Reading from the N-terminus, the 293-residue chain is Formamidopyrimidine-DNA glycosylase (293 aa).

Proline 2 functions as the Schiff-base intermediate with DNA in the catalytic mechanism. Residue glutamate 3 is the Proton donor of the active site. The active-site Proton donor; for beta-elimination activity is the lysine 58. Histidine 104, arginine 123, and lysine 166 together coordinate DNA. The segment at 257-293 adopts an FPG-type zinc-finger fold; it reads QVYDREGEPCRTDGCEGVVKRFVQNGRSTFWCPKCQR. The active-site Proton donor; for delta-elimination activity is arginine 283.

It belongs to the FPG family. As to quaternary structure, monomer. It depends on Zn(2+) as a cofactor.

It carries out the reaction Hydrolysis of DNA containing ring-opened 7-methylguanine residues, releasing 2,6-diamino-4-hydroxy-5-(N-methyl)formamidopyrimidine.. The enzyme catalyses 2'-deoxyribonucleotide-(2'-deoxyribose 5'-phosphate)-2'-deoxyribonucleotide-DNA = a 3'-end 2'-deoxyribonucleotide-(2,3-dehydro-2,3-deoxyribose 5'-phosphate)-DNA + a 5'-end 5'-phospho-2'-deoxyribonucleoside-DNA + H(+). Its function is as follows. Involved in base excision repair of DNA damaged by oxidation or by mutagenic agents. Acts as a DNA glycosylase that recognizes and removes damaged bases. Has a preference for oxidized purines, such as 7,8-dihydro-8-oxoguanine (8-oxoG). Has AP (apurinic/apyrimidinic) lyase activity and introduces nicks in the DNA strand. Cleaves the DNA backbone by beta-delta elimination to generate a single-strand break at the site of the removed base with both 3'- and 5'-phosphates. This chain is Formamidopyrimidine-DNA glycosylase, found in Bradyrhizobium sp. (strain ORS 278).